We begin with the raw amino-acid sequence, 2169 residues long: Voltage-dependent L-type calcium channel subunit alpha-1C (2169 aa).

Over 1–153 (MVPLVQPTTP…RACISIVEWK (153 aa)) the chain is Cytoplasmic. The interval 76-97 (GAALSWQAAIDAGRQAKLMGSA) is calmodulin-binding. The span at 98–108 (GNTTISTVSST) shows a compositional bias: polar residues. Residues 98–127 (GNTTISTVSSTQRKRQQYGKPKKQSGTTAT) are disordered. Basic residues predominate over residues 109–120 (QRKRQQYGKPKK). An I repeat occupies 140–437 (NPIRRACISI…LVLGVLSGEF (298 aa)). The helical transmembrane segment at 154–172 (PFEIIILLTIFANCVALAI) threads the bilayer. Residues 173 to 187 (YIPFPEDDSNATNSN) lie on the Extracellular side of the membrane. Residue N182 is glycosylated (N-linked (GlcNAc...) asparagine). The helical transmembrane segment at 188 to 208 (LERVEYLFLIIFTVEAFLKVI) threads the bilayer. The Cytoplasmic segment spans residues 209–217 (AYGLLFHPN). The helical transmembrane segment at 218 to 238 (AYLRNGWNLLDFIIVVVGLFS) threads the bilayer. Topologically, residues 239–261 (AILEQATKADGANALGGKGAGFD) are extracellular. A helical membrane pass occupies residues 262–280 (VKALRAFRVLRPLRLVSGV). Residues 281–297 (PSLQVVLNSIIKAMVPL) are Cytoplasmic-facing. The chain crosses the membrane as a helical span at residues 298-319 (LHTALLVLFVIIIYAIIGLELF). Over 320 to 379 (MGKMHKTCYNQEGITDVPAEEDPSPCALESGHGRQCQNGTVCKPGWDGPKHGITNFDNFA) the chain is Extracellular. A disulfide bond links C345 and C361. The N-linked (GlcNAc...) asparagine glycan is linked to N357. Residues 380 to 401 (FAMLTVFQCITMEGWTDVLYWM) constitute an intramembrane region (pore-forming). The Selectivity filter of repeat I motif lies at 390-393 (TMEG). E392 serves as a coordination point for Ca(2+). Residues 402–409 (QDAMGYEL) are Extracellular-facing. A helical transmembrane segment spans residues 410 to 430 (PWVYFVSLVIFGSFFVLNLVL). Topologically, residues 431–553 (GVLSGEFSKE…RKCRAAVKSN (123 aa)) are cytoplasmic. Residues 457–474 (QQLEEDLKGYLDWITQAE) are AID/alpha-interaction domain; mediates interaction with the beta subunit. The tract at residues 478–510 (PENEDEGVDEEKPRNMSMPTSETESVNTENVAG) is disordered. A compositionally biased stretch (polar residues) spans 494–507 (SMPTSETESVNTEN). Position 498 is a phosphoserine (S498). Residue T505 is modified to Phosphothreonine. The stretch at 539–785 (NRFCRRKCRA…VFLAIAVDNL (247 aa)) is one II repeat. Residues 554 to 572 (VFYWLVIFLVFLNTLTIAS) form a helical membrane-spanning segment. The Extracellular segment spans residues 573–583 (EHYNQPHWLTE). The helical transmembrane segment at 584–604 (VQDTANKALLALFTAEMLLKM) threads the bilayer. Residues 605 to 615 (YSLGLQAYFVS) are Cytoplasmic-facing. A helical transmembrane segment spans residues 616-635 (LFNRLDCFIVCGGILETILV). Topologically, residues 636-644 (ETKIMSPLG) are extracellular. The chain crosses the membrane as a helical span at residues 645 to 663 (ISVLRCVRLLRIFKITRYW). The Cytoplasmic segment spans residues 664-682 (NSLSNLVASLLNSVRSIAS). A helical membrane pass occupies residues 683 to 702 (LLLLLFLFIIIFSLLGMQLF). Residues 703–722 (GGKFNFDEMRTRRSTFDNFP) lie on the Extracellular side of the membrane. The segment at residues 723 to 744 (QSLLTVFQILTGEDWNSVMYDG) is an intramembrane region (pore-forming). Positions 733-736 (TGED) match the Selectivity filter of repeat II motif. Residue E735 participates in Ca(2+) binding. Over 745–754 (IMAYGGPSFP) the chain is Extracellular. The helical transmembrane segment at 755-774 (GMLVCIYFIILFICGNYILL) threads the bilayer. Topologically, residues 775-929 (NVFLAIAVDN…LQCHRIVNDT (155 aa)) are cytoplasmic. Residues 793–890 (SAQKEEEEEK…EMPVGPRPRP (98 aa)) are disordered. A compositionally biased stretch (basic and acidic residues) spans 812 to 835 (SPEKKQEVVEKPAVEETKEEKIEL). Phosphoserine occurs at positions 837 and 844. The segment at 858-905 (NENEDKSPYPNPDAAGEEDEEEPEMPVGPRPRPLSELHLKEKAVPMPE) is interaction with STAC2. A compositionally biased stretch (acidic residues) spans 872-881 (AGEEDEEEPE). Residues 916–1198 (NRFRLQCHRI…IFVGFVIVTF (283 aa)) form an III repeat. A helical transmembrane segment spans residues 930–948 (IFTNLILFFILLSSISLAA). Over 949–960 (EDPVQHTSFRNH) the chain is Extracellular. Residues 961–980 (ILFYFDIVFTTIFTIEIALK) form a helical membrane-spanning segment. The Cytoplasmic portion of the chain corresponds to 981–996 (MTAYGAFLHKGSFCRN). The helical transmembrane segment at 997–1015 (YFNILDLLVVSVSLISFGI) threads the bilayer. Topologically, residues 1016 to 1022 (QSSAINV) are extracellular. A helical transmembrane segment spans residues 1023 to 1041 (VKILRVLRVLRPLRAINRA). Residues 1042–1060 (KGLKHVVQCVFVAIRTIGN) are Cytoplasmic-facing. The helical transmembrane segment at 1061-1080 (IVIVTTLLQFMFACIGVQLF) threads the bilayer. The Extracellular segment spans residues 1081 to 1130 (KGKLYTCSDSSKQTEAECKGNYITYKDGEVDQPIIQPRSWENSKFDFDNV). C1087 and C1098 are oxidised to a cystine. The tract at residues 1118 to 1207 (RSWENSKFDF…FQEQGEQEYK (90 aa)) is dihydropyridine binding. The segment at residues 1131–1151 (LAAMMALFTVSTFEGWPELLY) is an intramembrane region (pore-forming). The Selectivity filter of repeat III motif lies at 1142 to 1145 (TFEG). Position 1144 (E1144) interacts with Ca(2+). Residues 1152 to 1168 (RSIDSHTEDKGPIYNYR) lie on the Extracellular side of the membrane. Residues 1169 to 1190 (VEISIFFIIYIIIIAFFMMNIF) traverse the membrane as a helical segment. Topologically, residues 1191 to 1248 (VGFVIVTFQEQGEQEYKNCELDKNQRQCVEYALKARPLRRYIPKNQHQYKVWYVVNST) are cytoplasmic. The stretch at 1235–1508 (NQHQYKVWYV…LFVAVVMDNF (274 aa)) is one IV repeat. A helical transmembrane segment spans residues 1249–1270 (YFEYLMFVLILLNTICLAMQHY). Over 1271–1278 (GQSCLFKI) the chain is Extracellular. The chain crosses the membrane as a helical span at residues 1279–1300 (AMNILNMLFTGLFTVEMILKLI). Residues 1301–1310 (AFKPKHYFCD) are Cytoplasmic-facing. The helical transmembrane segment at 1311-1330 (AWNTFDALIVVGSIVDIAIT) threads the bilayer. The Extracellular segment spans residues 1331–1353 (EVNPAEHTQCSPSMNAEENSRIS). The helical transmembrane segment at 1354–1372 (ITFFRLFRVMRLVKLLSRG) threads the bilayer. Residues 1373 to 1390 (EGIRTLLWTFIKSFQALP) are Cytoplasmic-facing. A helical membrane pass occupies residues 1391 to 1411 (YVALLIVMLFFIYAVIGMQVF). Over 1412 to 1433 (GKIALNDTTEINRNNNFQTFPQ) the chain is Extracellular. A glycan (N-linked (GlcNAc...) asparagine) is linked at N1417. An intramembrane region (pore-forming) is located at residues 1434 to 1452 (AVLLLFRCATGEAWQDIML). Residues 1443–1446 (TGEA) carry the Selectivity filter of repeat IV motif. Residues 1453–1480 (ACMPGKKCAPESDPSNSTEGETPCGSSF) are Extracellular-facing. Positions 1459 to 1527 (KCAPESDPSN…LGPHHLDEFK (69 aa)) are dihydropyridine binding. A disulfide bridge links C1460 with C1476. N1468 carries N-linked (GlcNAc...) asparagine glycosylation. Residues 1473–1515 (ETPCGSSFAVFYFISFYMLCAFLIINLFVAVVMDNFDYLTRDW) are phenylalkylamine binding. Residues 1481–1505 (AVFYFISFYMLCAFLIINLFVAVVM) traverse the membrane as a helical segment. At 1506–2169 (DNFDYLTRDW…ADSRVHVRSL (664 aa)) the chain is on the cytoplasmic side. Positions 1640–1667 (DEVTVGKFYATFLIQEYFRKFKKRKEQG) are important for interaction with STAC1, STAC2 and STAC3. The interval 1646–1666 (KFYATFLIQEYFRKFKKRKEQ) is calmodulin-binding IQ region. Positions 1680–1699 (LQAGLRTLHDIGPEIRRAIS) are important for localization in at the junctional membrane. A phosphoserine mark is found at S1699 and S1720. Disordered stretches follow at residues 1761–1793 (KAGN…TGSN) and 1894–1920 (ENRQ…LRSA). A compositionally biased stretch (polar residues) spans 1780–1792 (STFTPSSYSSTGS). Basic and acidic residues predominate over residues 1894 to 1910 (ENRQLTPPEEDKGDTRP). Position 1927 is a phosphoserine (S1927).

Belongs to the calcium channel alpha-1 subunit (TC 1.A.1.11) family. CACNA1C subfamily. In terms of assembly, component of a calcium channel complex consisting of a pore-forming alpha subunit (CACNA1C) and ancillary beta, gamma and delta subunits. The channel complex contains alpha, beta, gamma and delta subunits in a 1:1:1:1 ratio, i.e. it contains only one of each type of subunit. CACNA1C channel activity is modulated by ancillary subunits, such as CACNB1, CACNB2, CACNB3, CACNA2D1 and CACNA2D4. Interacts with CACNB1. Interacts with CACNB2. Identified in a complex with CACNA2D4 and CACNB3. Interacts with CACNB3. Interacts with CACNA2D1. Interacts with CACNA2D4. Interacts with the gamma subunits CACNG4, CACNG6, CACNG7 and CACNG8. Interacts with CALM1. Interacts (via the N-terminus and the C-terminal C and IQ motifs) with CABP1; this inhibits Ca(2+)-dependent channel inactivation. The binding via the C motif is calcium independent whereas the binding via IQ requires the presence of calcium and is mutually exclusive with calmodulin binding. The binding to the cytoplasmic N-terminal domain is calcium independent but is essential for the channel modulation. Interacts (via C-terminal CDB motif) with CABP5; in a calcium-dependent manner. Interacts with CIB1; the interaction increases upon cardiomyocytes hypertrophy. Interacts with STAC2 and STAC3; this inhibits channel inactivation. Post-translationally, phosphorylation by PKA at Ser-1927 activates the channel. Elevated levels of blood glucose lead to increased phosphorylation by PKA. Expressed in heart. Expressed in uterus.

Its subcellular location is the cell membrane. It is found in the sarcolemma. The protein resides in the perikaryon. It localises to the postsynaptic density membrane. The protein localises to the cell projection. Its subcellular location is the dendrite. It is found in the T-tubule. It carries out the reaction Ca(2+)(in) = Ca(2+)(out). With respect to regulation, inhibited by dihydropyridines (DHP), such as isradipine. Inhibited by nifedipine. Channel activity is regulated by Ca(2+) and calmodulin. Binding of STAC1, STAC2 or STAC3 to a region that overlaps with the calmodulin binding site inhibits channel inactivation by Ca(2+) and calmodulin. Binding of calmodulin or CABP1 at the same regulatory sites results in opposite effects on the channel function. Shear stress and pressure increases calcium channel activity. Functionally, pore-forming, alpha-1C subunit of the voltage-gated calcium channel that gives rise to L-type calcium currents. Mediates influx of calcium ions into the cytoplasm, and thereby triggers calcium release from the sarcoplasm. Plays an important role in excitation-contraction coupling in the heart. Required for normal heart development and normal regulation of heart rhythm. Required for normal contraction of smooth muscle cells in blood vessels and in the intestine. Essential for normal blood pressure regulation via its role in the contraction of arterial smooth muscle cells. Long-lasting (L-type) calcium channels belong to the 'high-voltage activated' (HVA) group. The polypeptide is Voltage-dependent L-type calcium channel subunit alpha-1C (CACNA1C) (Cavia porcellus (Guinea pig)).